The sequence spans 28 residues: Potassium channel toxin kappa-KTx 2.9 (28 aa).

Cystine bridges form between Cys-4/Cys-22 and Cys-8/Cys-18.

This sequence belongs to the short scorpion toxin superfamily. Potassium channel inhibitor family. Gamma-KTx 2 subfamily. In terms of processing, contains 2 disulfide bonds. As to expression, expressed by the venom gland.

It is found in the secreted. In terms of biological role, reversibly blocks voltage-gated potassium channels Kv1.2/KCNA2 and Kv1.3/KCNA3. This is Potassium channel toxin kappa-KTx 2.9 from Pandinus imperator (Emperor scorpion).